The primary structure comprises 277 residues: UPF0276 protein PP_0992 (277 aa).

The protein belongs to the UPF0276 family.

The polypeptide is UPF0276 protein PP_0992 (Pseudomonas putida (strain ATCC 47054 / DSM 6125 / CFBP 8728 / NCIMB 11950 / KT2440)).